The sequence spans 234 residues: Putative methyltransferase-like protein 15P1 (234 aa).

Residues 100 to 102, aspartate 119, phenylalanine 146, aspartate 169, and glutamine 176 contribute to the S-adenosyl-L-methionine site; that span reads GGH.

The protein belongs to the methyltransferase superfamily. RsmH family.

Functionally, probable S-adenosyl-L-methionine-dependent methyltransferase. The protein is Putative methyltransferase-like protein 15P1 (METTL15P1) of Homo sapiens (Human).